The chain runs to 303 residues: Glutaminase (303 aa).

Residues Ser-61, Asn-111, Glu-155, Asn-162, Tyr-186, Tyr-238, and Val-256 each contribute to the substrate site.

The protein belongs to the glutaminase family. As to quaternary structure, homotetramer.

It carries out the reaction L-glutamine + H2O = L-glutamate + NH4(+). This is Glutaminase from Marinomonas sp. (strain MWYL1).